We begin with the raw amino-acid sequence, 528 residues long: MSAKVPSNATFKNKEKPQEVRKANIIAARSVADAIRTSLGPKGMDKMIKTSRGEIIISNDGHTILKQMAILHPVARMLVEVSAAQDSEAGDGTTSVVILTGALLGAAERLLNKGIHPTIIADSFQSAAKRSVDILLEMCHKVSLSDREQLVRAASTSLSSKIVSQYSSFLAPLAVDSVLKISDENSKNVDLNDIRLVKKVGGTIDDTEMIDGVVLTQTAIKSAGGPTRKEKAKIGLIQFQISPPKPDTENNIIVNDYRQMDKILKEERAYLLNICKKIKKAKCNVLLIQKSILRDAVNDLALHFLSKLNIMVVKDIEREEIEFLSKGLGCKPIADIELFTEDRLGSADLVEEIDSDGSKIVRVTGIRNNNARPTVSVVIRGANNMIIDETERSLHDALCVIRCLVKERGLIAGGGAPEIEISRRLSKEARSMEGVQAFIWQEFASALEVIPTTLAENAGLNSIKVVTELRSKHENGELNDGISVRRSGTTNTYEEHILQPVLVSTSAITLASECVKSILRIDDIAFSR.

It belongs to the TCP-1 chaperonin family. As to quaternary structure, heterooligomeric complex of about 850 to 900 kDa that forms two stacked rings, 12 to 16 nm in diameter.

The protein resides in the cytoplasm. In terms of biological role, molecular chaperone; assists the folding of proteins upon ATP hydrolysis. Known to play a role, in vitro, in the folding of actin and tubulin. In yeast may play a role in mitotic spindle formation. The sequence is that of T-complex protein 1 subunit delta (CCT4) from Saccharomyces cerevisiae (strain ATCC 204508 / S288c) (Baker's yeast).